The primary structure comprises 702 residues: MDQHQHLNKTAESASSEKKKTRRCNGFKMFLAALSFSYIAKALGGIIMKISITQIERRFDISSSLAGLIDGSFEIGNLLVIVFVSYFGSKLHRPKLIGIGCLLMGTGSILTSLPHFFMGYYRYSKETHINPSENSTSSLSTCLINQTLSFNGTSPEIVEKDCVKESGSHMWIYVFMGNMLRGIGETPIVPLGISYIDDFAKEGHSSLYLGSLNAIGMIGPVIGFALGSLFAKMYVDIGYVDLSTIRITPKDSRWVGAWWLGFLVSGLFSIISSIPFFFLPKNPNKPQKERKISLSLHVLKTNDDRNQTANLTNQGKNVTKNVTGFFQSLKSILTNPLYVIFLLLTLLQVSSFIGSFTYVFKYMEQQYGQSASHANFLLGIITIPTVATGMFLGGFIIKKFKLSLVGIAKFSFLTSMISFLFQLLYFPLICESKSVAGLTLTYDGNNSVASHVDVPLSYCNSECNCDESQWEPVCGNNGITYLSPCLAGCKSSSGIKKHTVFYNCSCVEVTGLQNRNYSAHLGECPRDNTCTRKFFIYVAIQVINSLFSATGGTTFILLTVKIVQPELKALAMGFQSMVIRTLGGILAPIYFGALIDKTCMKWSTNSCGAQGACRIYNSVFFGRVYLGLSIALRFPALVLYIVFIFAMKKKFQGKDTKASDNERKVMDEANLEFLNNGEHFVPSAGTDSKTCNLDMQDNAAAN.

The Cytoplasmic segment spans residues 1 to 28 (MDQHQHLNKTAESASSEKKKTRRCNGFK). Residues 29–48 (MFLAALSFSYIAKALGGIIM) traverse the membrane as a helical segment. At 49–67 (KISITQIERRFDISSSLAG) the chain is on the extracellular side. The chain crosses the membrane as a helical span at residues 68–88 (LIDGSFEIGNLLVIVFVSYFG). Over 89 to 94 (SKLHRP) the chain is Cytoplasmic. The chain crosses the membrane as a helical span at residues 95 to 119 (KLIGIGCLLMGTGSILTSLPHFFMG). The Extracellular portion of the chain corresponds to 120–168 (YYRYSKETHINPSENSTSSLSTCLINQTLSFNGTSPEIVEKDCVKESGS). N134, N145, and N151 each carry an N-linked (GlcNAc...) asparagine glycan. A helical membrane pass occupies residues 169–197 (HMWIYVFMGNMLRGIGETPIVPLGISYID). At 198 to 216 (DFAKEGHSSLYLGSLNAIG) the chain is on the cytoplasmic side. A helical transmembrane segment spans residues 217–237 (MIGPVIGFALGSLFAKMYVDI). Residues 238–255 (GYVDLSTIRITPKDSRWV) are Extracellular-facing. A helical membrane pass occupies residues 256-280 (GAWWLGFLVSGLFSIISSIPFFFLP). At 281–331 (KNPNKPQKERKISLSLHVLKTNDDRNQTANLTNQGKNVTKNVTGFFQSLKS) the chain is on the cytoplasmic side. A phosphoserine mark is found at S293 and S295. The chain crosses the membrane as a helical span at residues 332–353 (ILTNPLYVIFLLLTLLQVSSFI). The Extracellular portion of the chain corresponds to 354-373 (GSFTYVFKYMEQQYGQSASH). The chain crosses the membrane as a helical span at residues 374 to 397 (ANFLLGIITIPTVATGMFLGGFII). Residues 398–401 (KKFK) lie on the Cytoplasmic side of the membrane. Residues 402-425 (LSLVGIAKFSFLTSMISFLFQLLY) traverse the membrane as a helical segment. The Extracellular segment spans residues 426 to 537 (FPLICESKSV…NTCTRKFFIY (112 aa)). A glycan (N-linked (GlcNAc...) asparagine) is linked at N445. The Kazal-like domain occupies 453–508 (DVPLSYCNSECNCDESQWEPVCGNNGITYLSPCLAGCKSSSGIKKHTVFYNCSCVE). Intrachain disulfides connect C459-C489, C465-C485, and C474-C506. N-linked (GlcNAc...) asparagine glycosylation is found at N503 and N516. Residues 538–560 (VAIQVINSLFSATGGTTFILLTV) form a helical membrane-spanning segment. At 561–569 (KIVQPELKA) the chain is on the cytoplasmic side. A helical membrane pass occupies residues 570 to 595 (LAMGFQSMVIRTLGGILAPIYFGALI). Over 596–629 (DKTCMKWSTNSCGAQGACRIYNSVFFGRVYLGLS) the chain is Extracellular. Residues 630 to 647 (IALRFPALVLYIVFIFAM) traverse the membrane as a helical segment. The Cytoplasmic segment spans residues 648–695 (KKKFQGKDTKASDNERKVMDEANLEFLNNGEHFVPSAGTDSKTCNLDM). At S683 the chain carries Phosphoserine.

The protein belongs to the organo anion transporter (TC 2.A.60) family. Post-translationally, N-glycosylated. As to expression, highly expressed in liver, in particular at the basolateral membrane of hepatocytes near the central vein. Expressed in the placenta. In testis, primarily localized to the basal membrane of Sertoli cells and weakly expressed in Leydig cells and within the tubules.

It localises to the basolateral cell membrane. The protein resides in the basal cell membrane. It carries out the reaction estrone 3-sulfate(out) + hydrogencarbonate(in) = estrone 3-sulfate(in) + hydrogencarbonate(out). It catalyses the reaction 17beta-estradiol 17-O-(beta-D-glucuronate)(out) = 17beta-estradiol 17-O-(beta-D-glucuronate)(in). The enzyme catalyses taurocholate(out) = taurocholate(in). The catalysed reaction is estrone 3-sulfate(out) = estrone 3-sulfate(in). It carries out the reaction dehydroepiandrosterone 3-sulfate(out) = dehydroepiandrosterone 3-sulfate(in). It catalyses the reaction leukotriene C4(out) = leukotriene C4(in). The enzyme catalyses L-thyroxine(out) = L-thyroxine(in). The catalysed reaction is prostaglandin E2(out) = prostaglandin E2(in). It carries out the reaction (4E,15E)-bilirubin IXalpha C8-beta-D-glucuronoside(out) = (4E,15E)-bilirubin IXalpha C8-beta-D-glucuronoside(in). It catalyses the reaction bilirubin IXalpha bis-beta-D-glucuronoside(out) = bilirubin IXalpha bis-beta-D-glucuronoside(in). Its function is as follows. Mediates the Na(+)-independent uptake of organic anions. Shows broad substrate specificity, can transport both organic anions such as bile acid taurocholate (cholyltaurine) and conjugated steroids (17-beta-glucuronosyl estradiol, dehydroepiandrosterone sulfate (DHEAS), and estrone 3-sulfate), as well as eicosanoid leukotriene C4, prostaglandin E2 and L-thyroxine (T4). Hydrogencarbonate/HCO3(-) acts as the probable counteranion that exchanges for organic anions. Shows a pH-sensitive substrate specificity towards sulfated steroids, taurocholate and T4 which may be ascribed to the protonation state of the binding site and leads to a stimulation of substrate transport in an acidic microenvironment. Involved in the clearance of bile acids and organic anions from the liver. Can take up bilirubin glucuronides from plasma into the liver, contributing to the detoxification-enhancing liver-blood shuttling loop. Transports coproporphyrin I and III, by-products of heme synthesis, and may be involved in their hepatic disposition. May contribute to regulate the transport of organic compounds in testes across the blood-testis-barrier. Can transport HMG-CoA reductase inhibitors (also known as statins) such as pitavastatin, a clinically important class of hypolipidemic drugs. May play an important role in plasma and tissue distribution of the structurally diverse chemotherapeutic drugs methotrexate and paclitaxel. May also transport antihypertension agents, such as the angiotensin-converting enzyme (ACE) inhibitor prodrug enalapril, and the highly selective angiotensin II AT1-receptor antagonist valsartan, in the liver. This Homo sapiens (Human) protein is Solute carrier organic anion transporter family member 1B3 (SLCO1B3).